A 572-amino-acid chain; its full sequence is Periplasmic pectate lyase (572 aa).

The signal sequence occupies residues 1-23 (MKKRALLLSMSVLAMLYIPAGQA).

The protein belongs to the polysaccharide lyase 2 family.

It localises to the periplasm. It catalyses the reaction Eliminative cleavage of (1-&gt;4)-alpha-D-galacturonan to give oligosaccharides with 4-deoxy-alpha-D-galact-4-enuronosyl groups at their non-reducing ends.. It participates in glycan metabolism; pectin degradation; 2-dehydro-3-deoxy-D-gluconate from pectin: step 2/5. The sequence is that of Periplasmic pectate lyase (pelY) from Yersinia pseudotuberculosis serotype I (strain IP32953).